We begin with the raw amino-acid sequence, 267 residues long: Matrilysin (267 aa).

Residues 1-20 (MAAMRLTLFRIVCLLPGCLA) form the signal peptide. Residues 21–97 (LPLSQEAGEV…PRCGVPDVAE (77 aa)) constitute a propeptide, activation peptide. Positions 88 to 95 (PRCGVPDV) match the Cysteine switch motif. A Zn(2+)-binding site is contributed by Cys90. Residue Asp156 coordinates Ca(2+). The Zn(2+) site is built by His166 and Asp168. 4 residues coordinate Ca(2+): Asp173, Gly174, Gly176, and Thr178. Residue His181 participates in Zn(2+) binding. Residues Gly188, Gly190, and Asp192 each contribute to the Ca(2+) site. His194 is a binding site for Zn(2+). The Ca(2+) site is built by Asp196 and Glu199. His217 serves as a coordination point for Zn(2+). Glu218 is a catalytic residue. Zn(2+) contacts are provided by His221 and His227.

Belongs to the peptidase M10A family. Ca(2+) is required as a cofactor. It depends on Zn(2+) as a cofactor.

It is found in the secreted. The protein resides in the extracellular space. It localises to the extracellular matrix. The enzyme catalyses Cleavage of 14-Ala-|-Leu-15 and 16-Tyr-|-Leu-17 in B chain of insulin. No action on collagen types I, II, IV, V. Cleaves gelatin chain alpha2(I) &gt; alpha1(I).. Its function is as follows. Degrades casein, gelatins of types I, III, IV, and V, and fibronectin. Activates procollagenase. The chain is Matrilysin (Mmp7) from Rattus norvegicus (Rat).